A 283-amino-acid chain; its full sequence is Probable endonuclease 4 (283 aa).

Zn(2+)-binding residues include His69, His113, Glu148, Asp182, His185, His217, Asp230, His232, and Glu262.

It belongs to the AP endonuclease 2 family. The cofactor is Zn(2+).

The enzyme catalyses Endonucleolytic cleavage to 5'-phosphooligonucleotide end-products.. Endonuclease IV plays a role in DNA repair. It cleaves phosphodiester bonds at apurinic or apyrimidinic (AP) sites, generating a 3'-hydroxyl group and a 5'-terminal sugar phosphate. The protein is Probable endonuclease 4 of Bifidobacterium longum (strain DJO10A).